Here is a 133-residue protein sequence, read N- to C-terminus: Phosphoribosyl-AMP cyclohydrolase (133 aa).

Aspartate 77 lines the Mg(2+) pocket. Residue cysteine 78 participates in Zn(2+) binding. Mg(2+) is bound by residues aspartate 79 and aspartate 81. Positions 95 and 102 each coordinate Zn(2+).

It belongs to the PRA-CH family. Homodimer. The cofactor is Mg(2+). Requires Zn(2+) as cofactor.

It localises to the cytoplasm. The catalysed reaction is 1-(5-phospho-beta-D-ribosyl)-5'-AMP + H2O = 1-(5-phospho-beta-D-ribosyl)-5-[(5-phospho-beta-D-ribosylamino)methylideneamino]imidazole-4-carboxamide. It participates in amino-acid biosynthesis; L-histidine biosynthesis; L-histidine from 5-phospho-alpha-D-ribose 1-diphosphate: step 3/9. Its function is as follows. Catalyzes the hydrolysis of the adenine ring of phosphoribosyl-AMP. This Azotobacter chroococcum mcd 1 protein is Phosphoribosyl-AMP cyclohydrolase.